We begin with the raw amino-acid sequence, 148 residues long: Large ribosomal subunit protein bL9 (148 aa).

The protein belongs to the bacterial ribosomal protein bL9 family.

Its function is as follows. Binds to the 23S rRNA. This Oceanobacillus iheyensis (strain DSM 14371 / CIP 107618 / JCM 11309 / KCTC 3954 / HTE831) protein is Large ribosomal subunit protein bL9.